The sequence spans 2381 residues: Myb-like protein U (2381 aa).

Disordered regions lie at residues 1–85 (MKTK…TSNN), 148–167 (SSSGTVNNSNNNNNNDGGIS), 178–492 (PTIP…NNNN), and 641–696 (NINN…GDEM). Low complexity-rich tracts occupy residues 30 to 41 (SKSSSKVSQSSS) and 64 to 79 (TIPAPLSTTITPPTLT). Composition is skewed to low complexity over residues 192 to 204 (NLSSSTSSTNILS), 225 to 261 (ENVNNINSGNVKNSKNNSGSSISSSISSSSSSGSSSS), and 291 to 315 (SNKSNSKKSSSNKSKSPSNKNNNKK). A compositionally biased stretch (acidic residues) spans 331–343 (SEYDSSDSSDMDL). The segment covering 363 to 405 (TTKPNNSNSNNNNNNNSINSTIPASNNINSANNSKTTNKNITS) has biased composition (low complexity). Residues 421–430 (SETPILTSVK) are compositionally biased toward polar residues. Composition is skewed to low complexity over residues 435–492 (QQIP…NNNN) and 641–692 (NINN…NNNN). One can recognise a Myb-like domain in the interval 856 to 899 (WHEEEKLLFRELFCAYGRDWQMVSTLMCGTKSPTQIKNFYYDVR). Disordered regions lie at residues 932 to 1024 (KPEQ…ETPP), 1068 to 1093 (INQSSNSSPVNNNNSNNNNNNNNINP), 1145 to 1207 (TSST…SNQE), 1295 to 1339 (STTT…PPID), 1422 to 1474 (PYYP…LSTP), 1597 to 1647 (PPAT…TTIV), 1667 to 1849 (PIVK…PPPV), 1961 to 1985 (TTVPGTTTTTNPNGSIPPKPSNGLA), 2055 to 2106 (TSTV…NGLT), and 2122 to 2280 (LSGI…NKND). Positions 936–953 (NVNSNNNNNGGGNSLKDG) are enriched in low complexity. Basic residues predominate over residues 982–995 (VKKKSRTASKRSFR). Residues 1000–1013 (ANETNRTPKNQPKP) show a composition bias toward polar residues. Low complexity-rich tracts occupy residues 1069–1092 (NQSSNSSPVNNNNSNNNNNNNNIN), 1145–1186 (TSST…TGSA), 1195–1205 (VNNNNNNNLSN), and 1306–1325 (TTTPTQQQFQQLQPTQQLQQ). The segment covering 1326 to 1337 (LPPPPPPPPKPP) has biased composition (pro residues). Residues 1427–1474 (PSSTTTNSATSTPTSTPTSTPSTSASTLTPTSTPTSTPVPAPTSLSTP) show a composition bias toward low complexity. Pro residues predominate over residues 1597–1606 (PPATITPILP). Positions 1618 to 1637 (SSSSSSSSSSSSSSSSSSSS) are enriched in low complexity. Polar residues-rich tracts occupy residues 1638–1647 (TTKNNSTTIV) and 1671–1701 (QESNSPSKTLPPSNSPSKTLPLSNSPSKTLL). Low complexity-rich tracts occupy residues 1702-1735 (PSNSSIPNKSTPSPIPKPTTSSTTYPVTTSNPSS) and 1743-1809 (TSNK…TLKP). Residues 1829–1844 (APTNSTNQNTIPNATT) show a composition bias toward polar residues. Low complexity-rich tracts occupy residues 1961–1970 (TTVPGTTTTT) and 2065–2097 (NNMTTTTTSSTSTTMTTPTSTNTTTNGTPQQST). The span at 2129 to 2138 (NTLSGKSPTP) shows a compositional bias: polar residues. Residues 2154-2209 (PSLSSSSANPISITNNTTSLSQQSNTTNTMPSTVSLSSGSTSINSNSSNSKSLRSP) show a composition bias toward low complexity. The span at 2210 to 2278 (KSSDNDGKES…NNNDKFDSNK (69 aa)) shows a compositional bias: basic and acidic residues.

The polypeptide is Myb-like protein U (mybU) (Dictyostelium discoideum (Social amoeba)).